The chain runs to 127 residues: Large ribosomal subunit protein uL22 (127 aa).

As to quaternary structure, part of the 50S ribosomal subunit.

In terms of biological role, this protein binds specifically to 23S rRNA; its binding is stimulated by other ribosomal proteins, e.g. L4, L17, and L20. It is important during the early stages of 50S assembly. It makes multiple contacts with different domains of the 23S rRNA in the assembled 50S subunit and ribosome. Its function is as follows. The globular domain of the protein is located near the polypeptide exit tunnel on the outside of the subunit, while an extended beta-hairpin is found that lines the wall of the exit tunnel in the center of the 70S ribosome. This is Large ribosomal subunit protein uL22 from Rhodopseudomonas palustris (strain ATCC BAA-98 / CGA009).